Here is a 60-residue protein sequence, read N- to C-terminus: Light-harvesting protein B-800/850 alpha chain (60 aa).

Over 1-14 (MNNAKIWTVVKPST) the chain is Cytoplasmic. Residues 15–35 (GIPLILGAVAVAALIVHAGLL) form a helical membrane-spanning segment. Residue histidine 31 coordinates a bacteriochlorophyll. Over 36–60 (TNTTWFANYWNGNPMATVVAVAPAQ) the chain is Periplasmic.

It belongs to the antenna complex alpha subunit family. As to quaternary structure, the core complex is formed by different alpha and beta chains, binding bacteriochlorophyll molecules, and arranged most probably in tetrameric structures disposed around the reaction center. The non-pigmented gamma chains may constitute additional components.

It localises to the cell inner membrane. Functionally, antenna complexes are light-harvesting systems, which transfer the excitation energy to the reaction centers. In Rhodobacter capsulatus (Rhodopseudomonas capsulata), this protein is Light-harvesting protein B-800/850 alpha chain (pucA).